The primary structure comprises 456 residues: tRNA modification GTPase MnmE (456 aa).

3 residues coordinate (6S)-5-formyl-5,6,7,8-tetrahydrofolate: Arg24, Glu81, and Lys120. In terms of domain architecture, TrmE-type G spans 216-379 (GMKVVIAGRP…LREHLKECIG (164 aa)). Asn226 is a K(+) binding site. GTP is bound by residues 226 to 231 (NAGKSS), 245 to 251 (TAIEGTT), and 270 to 273 (DTAG). Ser230 contributes to the Mg(2+) binding site. K(+) contacts are provided by Thr245, Ile247, and Thr250. Thr251 provides a ligand contact to Mg(2+). Lys456 contributes to the (6S)-5-formyl-5,6,7,8-tetrahydrofolate binding site.

The protein belongs to the TRAFAC class TrmE-Era-EngA-EngB-Septin-like GTPase superfamily. TrmE GTPase family. In terms of assembly, homodimer. Heterotetramer of two MnmE and two MnmG subunits. It depends on K(+) as a cofactor.

The protein resides in the cytoplasm. Exhibits a very high intrinsic GTPase hydrolysis rate. Involved in the addition of a carboxymethylaminomethyl (cmnm) group at the wobble position (U34) of certain tRNAs, forming tRNA-cmnm(5)s(2)U34. The sequence is that of tRNA modification GTPase MnmE from Marinobacter nauticus (strain ATCC 700491 / DSM 11845 / VT8) (Marinobacter aquaeolei).